We begin with the raw amino-acid sequence, 538 residues long: Cytosolic Fe-S cluster assembly factor NAR1 homolog (538 aa).

[4Fe-4S] cluster-binding residues include Cys19, Cys64, Cys67, Cys70, Cys218, Cys273, Cys453, and Cys457.

Belongs to the NARF family.

It is found in the cytoplasm. Its subcellular location is the nucleus. Component of the cytosolic Fe/S protein assembly machinery. Required for maturation of extramitochondrial Fe/S proteins. May play a role in the transfer of pre-assembled Fe/S clusters to target apoproteins. This Schizosaccharomyces pombe (strain 972 / ATCC 24843) (Fission yeast) protein is Cytosolic Fe-S cluster assembly factor NAR1 homolog.